The chain runs to 194 residues: Ion-translocating oxidoreductase complex subunit B (194 aa).

Residues 1–26 (MSSILIAVIAISALALVFGLILGFAS) are hydrophobic. In terms of domain architecture, 4Fe-4S spans 32–90 (ESDPIVDQIDSILPQTQCGQCGYPGCKPYAEAIANGDTINKCPPGGQATIEKLADLMGV). [4Fe-4S] cluster is bound by residues cysteine 49, cysteine 52, cysteine 57, cysteine 73, cysteine 114, cysteine 117, cysteine 120, cysteine 124, cysteine 144, cysteine 147, cysteine 150, and cysteine 154. 2 4Fe-4S ferredoxin-type domains span residues 105 to 134 (KIAF…GGTK) and 135 to 164 (ALHT…MIPV).

Belongs to the 4Fe4S bacterial-type ferredoxin family. RnfB subfamily. In terms of assembly, the complex is composed of six subunits: RnfA, RnfB, RnfC, RnfD, RnfE and RnfG. [4Fe-4S] cluster is required as a cofactor.

It localises to the cell inner membrane. Functionally, part of a membrane-bound complex that couples electron transfer with translocation of ions across the membrane. This chain is Ion-translocating oxidoreductase complex subunit B, found in Aliivibrio salmonicida (strain LFI1238) (Vibrio salmonicida (strain LFI1238)).